The chain runs to 73 residues: Large ribosomal subunit protein bL31 (73 aa).

Residues Cys-16, Cys-18, Cys-38, and Cys-41 each contribute to the Zn(2+) site.

Belongs to the bacterial ribosomal protein bL31 family. Type A subfamily. In terms of assembly, part of the 50S ribosomal subunit. It depends on Zn(2+) as a cofactor.

Its function is as follows. Binds the 23S rRNA. This is Large ribosomal subunit protein bL31 from Vibrio vulnificus (strain CMCP6).